Consider the following 126-residue polypeptide: Ribosome-binding factor A (126 aa).

It belongs to the RbfA family. Monomer. Binds 30S ribosomal subunits, but not 50S ribosomal subunits or 70S ribosomes.

The protein resides in the cytoplasm. One of several proteins that assist in the late maturation steps of the functional core of the 30S ribosomal subunit. Associates with free 30S ribosomal subunits (but not with 30S subunits that are part of 70S ribosomes or polysomes). Required for efficient processing of 16S rRNA. May interact with the 5'-terminal helix region of 16S rRNA. The chain is Ribosome-binding factor A from Nitrosospira multiformis (strain ATCC 25196 / NCIMB 11849 / C 71).